Here is a 224-residue protein sequence, read N- to C-terminus: UPF0758 protein PD_0117 (224 aa).

Positions S102–L224 constitute an MPN domain. H173, H175, and D186 together coordinate Zn(2+). The JAMM motif signature appears at H173 to D186.

The protein belongs to the UPF0758 family.

The sequence is that of UPF0758 protein PD_0117 from Xylella fastidiosa (strain Temecula1 / ATCC 700964).